Reading from the N-terminus, the 656-residue chain is MGKIIELNEALANQIAAGEVVERPASVVKELVENSIDAGSSKIIINVEEAGLRLIEVIDNGLGLEKEDVALALRRHATSKIKDSADLFRIRTLGFRGEALPSIASVSQMTIETSTAEEESGTKLVAKGGNIETLEPLAKRVGTKISVANLFYNTPARLKYIKSLQAELSHITDIINRLSLAHPEISFTLVNEGKEFLKTAGNGDLRQVIAAIYGIGTAKKMRQIKGSDLDFELTGYVSLPELTRANRNYITILINGRFIKNFLLNRAILEGYGNRLMVGRFPFAILSIKIDPTLADVNVHPTKQEVRLSKERELMALISKAIDEALSEGVLIPEALENLQGRAKEKESLSVQTELPLQNNPLYYDNVRQDFYVREEATFKINKNQASNDSSEQTFDNFTENQLNTDAVSEKMTDRTVESTTEITDNSLENTVSNFEIDFDNEAKISQSSTFPQLEYLAQLHATYLLCQSKEGLYLVDQHAAQERIKYEYWKDKIGEVSMEQQILLAPYLFTLAKNDFIVLAEKKDLLHEAGVFLEEYGENQFILREHPIWLKETEIEKSINEMIDIILSSKEFSLKKYRHDLAAMVACKSSIKANHPLDAESARALLAELATCKNPYSCAHGRPTIVHFSGDDIQKMFRRIQETHRSKAASWKDFE.

Belongs to the DNA mismatch repair MutL/HexB family.

Functionally, this protein is involved in the repair of mismatches in DNA. It is required for dam-dependent methyl-directed DNA mismatch repair. May act as a 'molecular matchmaker', a protein that promotes the formation of a stable complex between two or more DNA-binding proteins in an ATP-dependent manner without itself being part of a final effector complex. The polypeptide is DNA mismatch repair protein MutL (Lactococcus lactis subsp. lactis (strain IL1403) (Streptococcus lactis)).